Here is an 800-residue protein sequence, read N- to C-terminus: DNA topoisomerase 4 subunit A (800 aa).

A Topo IIA-type catalytic domain is found at 31-495 (LPDVRDGLKP…EIEEIKIDKE (465 aa)). Tyr119 acts as the O-(5'-phospho-DNA)-tyrosine intermediate in catalysis.

The protein belongs to the type II topoisomerase GyrA/ParC subunit family. ParC type 2 subfamily. As to quaternary structure, heterotetramer composed of ParC and ParE.

It localises to the cell membrane. It catalyses the reaction ATP-dependent breakage, passage and rejoining of double-stranded DNA.. In terms of biological role, topoisomerase IV is essential for chromosome segregation. It relaxes supercoiled DNA. Performs the decatenation events required during the replication of a circular DNA molecule. The sequence is that of DNA topoisomerase 4 subunit A from Staphylococcus aureus (strain NCTC 8325 / PS 47).